The chain runs to 884 residues: Valine--tRNA ligase (884 aa).

Positions 46-56 (PNVTGKLHLGH) match the 'HIGH' region motif. The short motif at 520-524 (KMSKS) is the 'KMSKS' region element. ATP is bound at residue Lys523. Positions 809–844 (LADLLNVEEELARLEKELAKWQKELNMVGKKLSNER) form a coiled coil.

It belongs to the class-I aminoacyl-tRNA synthetase family. ValS type 1 subfamily. As to quaternary structure, monomer.

It localises to the cytoplasm. It carries out the reaction tRNA(Val) + L-valine + ATP = L-valyl-tRNA(Val) + AMP + diphosphate. Its function is as follows. Catalyzes the attachment of valine to tRNA(Val). As ValRS can inadvertently accommodate and process structurally similar amino acids such as threonine, to avoid such errors, it has a 'posttransfer' editing activity that hydrolyzes mischarged Thr-tRNA(Val) in a tRNA-dependent manner. The polypeptide is Valine--tRNA ligase (Streptococcus agalactiae serotype III (strain NEM316)).